Reading from the N-terminus, the 200-residue chain is 2,3-bisphosphoglycerate-dependent phosphoglycerate mutase (200 aa).

His9 acts as the Tele-phosphohistidine intermediate in catalysis. His142 is an active-site residue.

Belongs to the phosphoglycerate mutase family. Homodimer.

The catalysed reaction is (2R)-2-phosphoglycerate = (2R)-3-phosphoglycerate. The protein operates within carbohydrate degradation; glycolysis; pyruvate from D-glyceraldehyde 3-phosphate: step 3/5. In terms of biological role, catalyzes the interconversion of 2-phosphoglycerate and 3-phosphoglycerate. In Thermoplasma acidophilum (strain ATCC 25905 / DSM 1728 / JCM 9062 / NBRC 15155 / AMRC-C165), this protein is 2,3-bisphosphoglycerate-dependent phosphoglycerate mutase.